The primary structure comprises 402 residues: Putative F-box protein At4g22180 (402 aa).

Residues 18 to 64 enclose the F-box domain; that stretch reads PNSWSELPLDLLTAVFERLSYANFQRAKSVCSSWHSGSRQSVPIQIP.

This Arabidopsis thaliana (Mouse-ear cress) protein is Putative F-box protein At4g22180.